The following is a 70-amino-acid chain: MFGLGGQELLLILLIILLLFGAKKLPELAKGLGKGMKEFKKAQTEIEDEFNKAMSDPPEKKEKESPSDKG.

The chain crosses the membrane as a helical span at residues 1–21 (MFGLGGQELLLILLIILLLFG). Residues 47–70 (EDEFNKAMSDPPEKKEKESPSDKG) are disordered. The span at 57–70 (PPEKKEKESPSDKG) shows a compositional bias: basic and acidic residues.

This sequence belongs to the TatA/E family. As to quaternary structure, forms a complex with TatC.

It localises to the cell inner membrane. Part of the twin-arginine translocation (Tat) system that transports large folded proteins containing a characteristic twin-arginine motif in their signal peptide across membranes. TatA could form the protein-conducting channel of the Tat system. This Prosthecochloris aestuarii (strain DSM 271 / SK 413) protein is Sec-independent protein translocase protein TatA.